A 162-amino-acid chain; its full sequence is Neuritin-like protein (162 aa).

The N-terminal stretch at 1-32 (MMCNCCHCHWRRRCQRLPCALTLLLLLPLAVA) is a signal peptide. Ala136 carries the GPI-anchor amidated alanine lipid modification. A propeptide spans 137-162 (PALAPAPAPVLLAAALALACLLGPLA) (removed in mature form).

Belongs to the neuritin family.

Its subcellular location is the cell membrane. This is Neuritin-like protein (Nrn1l) from Mus musculus (Mouse).